Consider the following 430-residue polypeptide: Serine hydroxymethyltransferase (430 aa).

120–122 (GHI) contacts (6S)-5,6,7,8-tetrahydrofolate. K226 bears the N6-(pyridoxal phosphate)lysine mark.

It belongs to the SHMT family. Homodimer. Requires pyridoxal 5'-phosphate as cofactor.

It is found in the cytoplasm. Its pathway is amino-acid biosynthesis; glycine biosynthesis; glycine from L-serine: step 1/1. In terms of biological role, catalyzes the reversible interconversion of serine and glycine with a modified folate serving as the one-carbon carrier. Also exhibits a pteridine-independent aldolase activity toward beta-hydroxyamino acids, producing glycine and aldehydes, via a retro-aldol mechanism. The polypeptide is Serine hydroxymethyltransferase (Pyrobaculum aerophilum (strain ATCC 51768 / DSM 7523 / JCM 9630 / CIP 104966 / NBRC 100827 / IM2)).